The chain runs to 165 residues: Phosphopantetheine adenylyltransferase (165 aa).

Threonine 10 lines the substrate pocket. ATP contacts are provided by residues 10 to 11 (TF) and histidine 18. Positions 42, 75, and 89 each coordinate substrate. Residues 90 to 92 (GVR), glutamate 100, and 125 to 131 (YTYVAST) contribute to the ATP site.

This sequence belongs to the bacterial CoaD family. In terms of assembly, homohexamer. Mg(2+) is required as a cofactor.

It is found in the cytoplasm. It carries out the reaction (R)-4'-phosphopantetheine + ATP + H(+) = 3'-dephospho-CoA + diphosphate. The protein operates within cofactor biosynthesis; coenzyme A biosynthesis; CoA from (R)-pantothenate: step 4/5. Its function is as follows. Reversibly transfers an adenylyl group from ATP to 4'-phosphopantetheine, yielding dephospho-CoA (dPCoA) and pyrophosphate. In Chlorobaculum tepidum (strain ATCC 49652 / DSM 12025 / NBRC 103806 / TLS) (Chlorobium tepidum), this protein is Phosphopantetheine adenylyltransferase.